A 344-amino-acid chain; its full sequence is Ferrochelatase (344 aa).

Fe cation contacts are provided by His-214 and Glu-295.

Belongs to the ferrochelatase family.

The protein resides in the cytoplasm. It catalyses the reaction heme b + 2 H(+) = protoporphyrin IX + Fe(2+). Its pathway is porphyrin-containing compound metabolism; protoheme biosynthesis; protoheme from protoporphyrin-IX: step 1/1. In terms of biological role, catalyzes the ferrous insertion into protoporphyrin IX. This is Ferrochelatase from Allorhizobium ampelinum (strain ATCC BAA-846 / DSM 112012 / S4) (Agrobacterium vitis (strain S4)).